Consider the following 513-residue polypeptide: ATP synthase subunit alpha (513 aa).

Residue 169–176 coordinates ATP; sequence GDRQTGKT.

The protein belongs to the ATPase alpha/beta chains family. In terms of assembly, F-type ATPases have 2 components, CF(1) - the catalytic core - and CF(0) - the membrane proton channel. CF(1) has five subunits: alpha(3), beta(3), gamma(1), delta(1), epsilon(1). CF(0) has three main subunits: a(1), b(2) and c(9-12). The alpha and beta chains form an alternating ring which encloses part of the gamma chain. CF(1) is attached to CF(0) by a central stalk formed by the gamma and epsilon chains, while a peripheral stalk is formed by the delta and b chains.

It is found in the cell inner membrane. It catalyses the reaction ATP + H2O + 4 H(+)(in) = ADP + phosphate + 5 H(+)(out). In terms of biological role, produces ATP from ADP in the presence of a proton gradient across the membrane. The alpha chain is a regulatory subunit. This chain is ATP synthase subunit alpha, found in Shewanella loihica (strain ATCC BAA-1088 / PV-4).